The primary structure comprises 1806 residues: Focadhesin (1806 aa).

A disordered region spans residues 733–760 (ARPIPKQPEVEDEVKQNEEENEEEEDIS).

Its subcellular location is the cell junction. It is found in the focal adhesion. The protein localises to the cytoplasm. It localises to the cytosol. In terms of biological role, required for the maintenance of SKIC2 and SKIC3 proteostatic levels in the liver. May be involved in the regulation of RNA degradation by the exosome complex. This Danio rerio (Zebrafish) protein is Focadhesin (focad).